We begin with the raw amino-acid sequence, 472 residues long: Sodium-coupled neutral amino acid transporter 5 (472 aa).

Position 1 is an N-acetylmethionine (methionine 1). Topologically, residues 1–48 (MELQDPKMNGALPSDAVGYRQEREGFLPSRGPAPGSKPVQFMDFEGKT) are cytoplasmic. Residues 49–71 (SFGMSVFNLSNAIMGSGILGLAY) form a helical membrane-spanning segment. Residues 72 to 87 (AMAHTGVIFFLALLLC) are Extracellular-facing. Residues 88-108 (IALLSSYSIHLLLTCAGIAGI) traverse the membrane as a helical segment. Topologically, residues 109–125 (RAYEQLGQRAFGPAGKV) are cytoplasmic. Residues 126–146 (VVATVICLHNVGAMSSYLFII) form a helical membrane-spanning segment. The Extracellular portion of the chain corresponds to 147 to 166 (KSELPLVIGTFLYMDPEGDW). A helical membrane pass occupies residues 167-187 (FLKGNLLIIIVSVLIILPLAL). The Cytoplasmic segment spans residues 188 to 192 (MKHLG). The helical transmembrane segment at 193–213 (YLGYTSGLSLTCMLFFLVSVI) threads the bilayer. Over 214–257 (YKKFQLGCAIGHNETAMESEALVGLPSQGLNSSCEAQMFTVDSQ) the chain is Extracellular. Cysteine 221 and cysteine 247 are oxidised to a cystine. A glycan (N-linked (GlcNAc...) asparagine) is linked at asparagine 226. A helical transmembrane segment spans residues 258–278 (MSYTVPIMAFAFVCHPEVLPI). Residues 279-295 (YTELCRPSKRRMQAVAN) are Cytoplasmic-facing. Residues 296–316 (VSIGAMFCMYGLTATFGYLTF) traverse the membrane as a helical segment. The Extracellular segment spans residues 317 to 334 (YSSVKAEMLHMYSQKDPL). A helical transmembrane segment spans residues 335 to 355 (ILCVRLAVLLAVTLTVPVVLF). Topologically, residues 356-376 (PIRRALQQLLFPGKAFSWPRH) are cytoplasmic. Residues 377-397 (VAIALILLVLVNVLVICVPTI) traverse the membrane as a helical segment. Residues 398 to 399 (RD) lie on the Extracellular side of the membrane. A helical transmembrane segment spans residues 400 to 420 (IFGVIGSTSAPSLIFILPSIF). Residues 421–439 (YLRIVPSEVEPFLSWPKIQ) lie on the Cytoplasmic side of the membrane. Residues 440 to 460 (ALCFGVLGVLFMAVSLGFMFA) form a helical membrane-spanning segment. Over 461 to 472 (NWATGQSRMSGH) the chain is Extracellular.

Belongs to the amino acid/polyamine transporter 2 family. In terms of tissue distribution, predominantly expressed in stomach, brain, liver, lung and intestinal tract.

It localises to the cell membrane. It carries out the reaction L-serine(out) + Na(+)(out) + H(+)(in) = L-serine(in) + Na(+)(in) + H(+)(out). The catalysed reaction is L-alanine(out) + Na(+)(out) + H(+)(in) = L-alanine(in) + Na(+)(in) + H(+)(out). It catalyses the reaction glycine(out) + Na(+)(out) + H(+)(in) = glycine(in) + Na(+)(in) + H(+)(out). The enzyme catalyses L-glutamine(out) + Na(+)(out) + H(+)(in) = L-glutamine(in) + Na(+)(in) + H(+)(out). It carries out the reaction L-asparagine(out) + Na(+)(out) + H(+)(in) = L-asparagine(in) + Na(+)(in) + H(+)(out). The catalysed reaction is L-histidine(out) + Na(+)(out) + H(+)(in) = L-histidine(in) + Na(+)(in) + H(+)(out). It catalyses the reaction L-cysteine(out) + Na(+)(out) + H(+)(in) = L-cysteine(in) + Na(+)(in) + H(+)(out). With respect to regulation, not inhibited by lithium. Partial allosteric regulation on ions sodium binding. Its function is as follows. Symporter that cotransports neutral amino acids and sodium ions, coupled to an H(+) antiporter activity. Releases L-glutamine and glycine from astroglial cells and may participate in the glutamate/GABA-L-glutamine cycle and the NMDA receptors activation. In addition, contributes significantly to L-glutamine uptake in retina, namely in ganglion and Mueller cells therefore, participates in the retinal glutamate-glutamine cycle. The transport activity is pH sensitive and Li(+) tolerant. Moreover functions in both direction and is associated with large uncoupled fluxes of protons. The transport is electroneutral coupled to the cotransport of 1 Na(+) and the antiport of 1 H(+). May have a particular importance for modulation of net hepatic glutamine flux. The polypeptide is Sodium-coupled neutral amino acid transporter 5 (SLC38A5) (Homo sapiens (Human)).